A 258-amino-acid polypeptide reads, in one-letter code: Peroxisomal membrane protein 11B (258 aa).

The residue at position 43 (lysine 43) is an N6-acetyllysine. The segment at 210 to 258 (VVRNACDLFIPLDKLGLWRCGPGIVGLCGLVSSILSILTLICPWLRLKP) is interaction with PEX19, PEX11G and FIS1 and peroxisome targeting. Residues 232–254 (GIVGLCGLVSSILSILTLICPWL) form a helical membrane-spanning segment.

It belongs to the peroxin-11 family. In terms of assembly, homodimer. Heterodimer with PEX11G. Interacts with PEX19. Interacts with FIS1.

It is found in the peroxisome membrane. Involved in peroxisomal proliferation. May regulate peroxisome division by recruiting the dynamin-related GTPase DNM1L to the peroxisomal membrane. Promotes membrane protrusion and elongation on the peroxisomal surface. The polypeptide is Peroxisomal membrane protein 11B (PEX11B) (Bos taurus (Bovine)).